The chain runs to 267 residues: 4-hydroxy-tetrahydrodipicolinate reductase (267 aa).

NAD(+)-binding positions include 8-13 (GAAGRM) and D34. R35 contacts NADP(+). Residues 98 to 100 (GTT) and 122 to 125 (AANF) contribute to the NAD(+) site. The Proton donor/acceptor role is filled by H155. Residue H156 participates in (S)-2,3,4,5-tetrahydrodipicolinate binding. The active-site Proton donor is K159. Position 165 to 166 (165 to 166 (GT)) interacts with (S)-2,3,4,5-tetrahydrodipicolinate.

It belongs to the DapB family.

The protein resides in the cytoplasm. It catalyses the reaction (S)-2,3,4,5-tetrahydrodipicolinate + NAD(+) + H2O = (2S,4S)-4-hydroxy-2,3,4,5-tetrahydrodipicolinate + NADH + H(+). The catalysed reaction is (S)-2,3,4,5-tetrahydrodipicolinate + NADP(+) + H2O = (2S,4S)-4-hydroxy-2,3,4,5-tetrahydrodipicolinate + NADPH + H(+). Its pathway is amino-acid biosynthesis; L-lysine biosynthesis via DAP pathway; (S)-tetrahydrodipicolinate from L-aspartate: step 4/4. In terms of biological role, catalyzes the conversion of 4-hydroxy-tetrahydrodipicolinate (HTPA) to tetrahydrodipicolinate. The polypeptide is 4-hydroxy-tetrahydrodipicolinate reductase (Pseudomonas putida (strain ATCC 700007 / DSM 6899 / JCM 31910 / BCRC 17059 / LMG 24140 / F1)).